Reading from the N-terminus, the 195-residue chain is 3-isopropylmalate dehydratase small subunit (195 aa).

It belongs to the LeuD family. LeuD type 1 subfamily. As to quaternary structure, heterodimer of LeuC and LeuD.

It catalyses the reaction (2R,3S)-3-isopropylmalate = (2S)-2-isopropylmalate. It participates in amino-acid biosynthesis; L-leucine biosynthesis; L-leucine from 3-methyl-2-oxobutanoate: step 2/4. Functionally, catalyzes the isomerization between 2-isopropylmalate and 3-isopropylmalate, via the formation of 2-isopropylmaleate. The polypeptide is 3-isopropylmalate dehydratase small subunit (Koribacter versatilis (strain Ellin345)).